A 311-amino-acid polypeptide reads, in one-letter code: Aspartate carbamoyltransferase catalytic subunit (311 aa).

The carbamoyl phosphate site is built by arginine 55 and threonine 56. Position 85 (lysine 85) interacts with L-aspartate. Carbamoyl phosphate-binding residues include arginine 106, histidine 135, and glutamine 138. Residues arginine 168 and arginine 230 each contribute to the L-aspartate site. Residues leucine 268 and proline 269 each contribute to the carbamoyl phosphate site.

The protein belongs to the aspartate/ornithine carbamoyltransferase superfamily. ATCase family. In terms of assembly, heterododecamer (2C3:3R2) of six catalytic PyrB chains organized as two trimers (C3), and six regulatory PyrI chains organized as three dimers (R2).

It catalyses the reaction carbamoyl phosphate + L-aspartate = N-carbamoyl-L-aspartate + phosphate + H(+). It functions in the pathway pyrimidine metabolism; UMP biosynthesis via de novo pathway; (S)-dihydroorotate from bicarbonate: step 2/3. In terms of biological role, catalyzes the condensation of carbamoyl phosphate and aspartate to form carbamoyl aspartate and inorganic phosphate, the committed step in the de novo pyrimidine nucleotide biosynthesis pathway. This is Aspartate carbamoyltransferase catalytic subunit from Yersinia enterocolitica serotype O:8 / biotype 1B (strain NCTC 13174 / 8081).